A 167-amino-acid chain; its full sequence is Endoribonuclease YbeY (167 aa).

Zn(2+) contacts are provided by H131, H135, and H141.

The protein belongs to the endoribonuclease YbeY family. Requires Zn(2+) as cofactor.

Its subcellular location is the cytoplasm. Its function is as follows. Single strand-specific metallo-endoribonuclease involved in late-stage 70S ribosome quality control and in maturation of the 3' terminus of the 16S rRNA. In Rickettsia akari (strain Hartford), this protein is Endoribonuclease YbeY.